Reading from the N-terminus, the 469-residue chain is Swarming motility regulation sensor protein RssA (469 aa).

Transmembrane regions (helical) follow at residues 12-32 (IIFQ…WVKY) and 167-187 (VPLL…AYFS). The Histidine kinase domain maps to 245–459 (DAAHELRTPI…GFIIDLPESY (215 aa)). At His-248 the chain carries Phosphohistidine; by autocatalysis.

It is found in the cell inner membrane. The enzyme catalyses ATP + protein L-histidine = ADP + protein N-phospho-L-histidine.. In terms of biological role, member of the two-component regulatory system RssA/RssB involved in regulation of swarming motility which has been shown to be inhibited by saturated fatty acids. RssA/RssB regulates cellular fatty acid composition, hemolysin production and cell surface topography. RssA/RssB negatively regulates the activity of SlhBA. It can also act as a negative regulator for the control of the swarming initiation. This is Swarming motility regulation sensor protein RssA (rssA) from Serratia marcescens.